The chain runs to 121 residues: Large ribosomal subunit protein bL12 (121 aa).

This sequence belongs to the bacterial ribosomal protein bL12 family. Homodimer. Part of the ribosomal stalk of the 50S ribosomal subunit. Forms a multimeric L10(L12)X complex, where L10 forms an elongated spine to which 2 to 4 L12 dimers bind in a sequential fashion. Binds GTP-bound translation factors.

Its function is as follows. Forms part of the ribosomal stalk which helps the ribosome interact with GTP-bound translation factors. Is thus essential for accurate translation. The protein is Large ribosomal subunit protein bL12 of Mesomycoplasma hyopneumoniae (strain 232) (Mycoplasma hyopneumoniae).